The following is a 308-amino-acid chain: MAAVIDNEMLDDILAQVRPLLGQGKVADYIPALASVSGNKLAIAICTVEGQLYQAGDATERFSIQSISKVLSLVAAMRQYEEDEIWQRVGKDPSGQPFNSLLQLEIEQGKPRNPFINAGALVVCDMLQSRLSAPRQRMLEIVRQLSGVSDLSYDANVARSEFEHSARNAAIAWLMKSFGNFHNDVATVLQNYFHYCALKMSCVELARTFLFLADKGYSSHHAQAVVTPMQARQVNALMATSGMYQNAGEFAWRVGLPAKSGVGGGVVAIVPHEMAIAVWSPELDDTGNSLAGVAVLEKLTQRLGRSVY.

Ser66, Asn117, Glu161, Asn168, Tyr192, Tyr244, and Val262 together coordinate substrate.

Belongs to the glutaminase family. In terms of assembly, homotetramer.

The catalysed reaction is L-glutamine + H2O = L-glutamate + NH4(+). The chain is Glutaminase from Enterobacter sp. (strain 638).